The sequence spans 217 residues: Melanocortin-2 receptor accessory protein 2A (217 aa).

Residue Asn-8 is glycosylated (N-linked (GlcNAc...) asparagine). The helical transmembrane segment at 42-62 (IVIGFWVGLAVFVIFMFFVLT) threads the bilayer.

This sequence belongs to the MRAP family. Interacts with mc4r.

Its subcellular location is the cell membrane. It localises to the endoplasmic reticulum membrane. In terms of biological role, inhibitor of melanocortin receptor 4 (mc4r), a receptor involved in energy homeostasis. Plays a role during larval development in the control of energy homeostasis and body weight regulation by decreasing ligand-sensitivity of mc4r and mc4r-mediated generation of cAMP, leading to stimulate growth during larval development. Acts by stabilizing an inactive conformation of mc4r during embryonic development, when all the energy consumed is obtained from the yolk sac, possibly to speed the rapid maturation to the mobile free-feeding juvenile stage reached at 5 dpf. The polypeptide is Melanocortin-2 receptor accessory protein 2A (mrap2a) (Danio rerio (Zebrafish)).